A 479-amino-acid chain; its full sequence is Aspartyl/glutamyl-tRNA(Asn/Gln) amidotransferase subunit B (479 aa).

This sequence belongs to the GatB/GatE family. GatB subfamily. Heterotrimer of A, B and C subunits.

The enzyme catalyses L-glutamyl-tRNA(Gln) + L-glutamine + ATP + H2O = L-glutaminyl-tRNA(Gln) + L-glutamate + ADP + phosphate + H(+). The catalysed reaction is L-aspartyl-tRNA(Asn) + L-glutamine + ATP + H2O = L-asparaginyl-tRNA(Asn) + L-glutamate + ADP + phosphate + 2 H(+). Functionally, allows the formation of correctly charged Asn-tRNA(Asn) or Gln-tRNA(Gln) through the transamidation of misacylated Asp-tRNA(Asn) or Glu-tRNA(Gln) in organisms which lack either or both of asparaginyl-tRNA or glutaminyl-tRNA synthetases. The reaction takes place in the presence of glutamine and ATP through an activated phospho-Asp-tRNA(Asn) or phospho-Glu-tRNA(Gln). This chain is Aspartyl/glutamyl-tRNA(Asn/Gln) amidotransferase subunit B, found in Streptococcus pyogenes serotype M6 (strain ATCC BAA-946 / MGAS10394).